A 221-amino-acid chain; its full sequence is MTAWLDFPLALSPLVVVSMKGGSFGQGSEANGSPQLTGLSECGADRIFLQGQAGIPGIPGVPGTNGLPGAKGDLGPQGPPGERGSTGIPGKAGPKGDKGDQGEACSLASCQQQEAGAKDCKELLDRGETLTGWYMIYPTTGRGMRAYCDMETDGGGWLVFQRRLDGSVDFYRDWEAYKKGFGRQVSEFWLGNDKIHLLTSSGIQQLRIDVEDFNNSKTFAK.

The signal sequence occupies residues methionine 1 to glycine 25. The 55-residue stretch at glutamine 50 to alanine 104 folds into the Collagen-like domain. Residues glycine 54–alanine 104 form a disordered region. The region spanning glutamine 111–lysine 221 is the Fibrinogen C-terminal domain. A disulfide bridge links cysteine 120 with cysteine 148.

This sequence belongs to the ficolin lectin family. Veficolin subfamily. Expressed by the mandibular venom duct.

The protein localises to the secreted. In terms of biological role, initiates complement activation and/or interferes in platelet aggregation and/or blood coagulation. This is Veficolin-1 from Varanus komodoensis (Komodo dragon).